The following is a 514-amino-acid chain: Steroid 17-alpha-hydroxylase/17,20 lyase (514 aa).

Heme is bound at residue C445.

Belongs to the cytochrome P450 family. The cofactor is heme.

The protein resides in the membrane. It catalyses the reaction a C21-steroid + reduced [NADPH--hemoprotein reductase] + O2 = a 17alpha-hydroxy-C21-steroid + oxidized [NADPH--hemoprotein reductase] + H2O + H(+). The enzyme catalyses 17alpha-hydroxyprogesterone + reduced [NADPH--hemoprotein reductase] + O2 = androst-4-ene-3,17-dione + acetate + oxidized [NADPH--hemoprotein reductase] + H2O + 2 H(+). The catalysed reaction is 17alpha-hydroxypregnenolone + reduced [NADPH--hemoprotein reductase] + O2 = 3beta-hydroxyandrost-5-en-17-one + acetate + oxidized [NADPH--hemoprotein reductase] + H2O + 2 H(+). The protein operates within lipid metabolism; steroid biosynthesis. Its function is as follows. Conversion of pregnenolone and progesterone to their 17-alpha-hydroxylated products and subsequently to dehydroepiandrosterone (DHEA) and androstenedione. Catalyzes both the 17-alpha-hydroxylation and the 17,20-lyase reaction. This is Steroid 17-alpha-hydroxylase/17,20 lyase (cyp17a1) from Ictalurus punctatus (Channel catfish).